The chain runs to 20 residues: Thylakoid lumenal 22 kDa protein (20 aa).

The protein localises to the plastid. The protein resides in the chloroplast thylakoid lumen. This chain is Thylakoid lumenal 22 kDa protein, found in Spinacia oleracea (Spinach).